A 294-amino-acid chain; its full sequence is MEIRRRSPSPKIRVSYLEYGVPHDDEKPRNILEKIVWEKDREVDLARQKVPLDQLKKKISLLPPTKDFVAALKRAQIKPAVIAEVKKASPSKGVIRDDFDPVAIAKAYAAGGASCLSVLTDKQFFQGGFDVLVQVRETVDLPLLCKEFVLSPYQLFQARAAGADAVLLIAAILTDQDLRYLNKVAQSLGLDVLVEVHDAKELERVLAIGGFSLIGINNRDLATFETDLATTEVLVNQFRDRLHLDTTVLVSESGLFARSDLDRVQAAGAEAVLVGEALMRQEDVESALHALVGA.

Belongs to the TrpC family.

The enzyme catalyses 1-(2-carboxyphenylamino)-1-deoxy-D-ribulose 5-phosphate + H(+) = (1S,2R)-1-C-(indol-3-yl)glycerol 3-phosphate + CO2 + H2O. It participates in amino-acid biosynthesis; L-tryptophan biosynthesis; L-tryptophan from chorismate: step 4/5. This chain is Indole-3-glycerol phosphate synthase, found in Synechococcus sp. (strain CC9902).